We begin with the raw amino-acid sequence, 583 residues long: Estrogen receptor (583 aa).

The tract at residues 1 to 138 is modulating; the sequence is MYPEESRGSG…GFEITKNTRF (138 aa). NR C4-type zinc fingers lie at residues 139–159 and 175–199; these read CAVC…CEGC and CPAT…LRKC. Positions 139 to 204 form a DNA-binding region, nuclear receptor; that stretch reads CAVCSDYASG…RLRKCYEVGM (66 aa). The tract at residues 205-265 is hinge; that stretch reads MKGGMRKDRG…PGGRSSLNNM (61 aa). Residues 220-263 form a disordered region; sequence EKHGPAQRQTSQNLPTHKASPQDGRKRAMSSSSTSGPGGRSSLN. The 236-residue stretch at 266–501 folds into the NR LBD domain; that stretch reads PPDQVLLLLQ…DLLLEMLDAH (236 aa). The tract at residues 506–583 is disordered; that stretch reads PVKPSQSWSQ…GSHSDCTRIP (78 aa). A compositionally biased stretch (low complexity) spans 539–551; the sequence is ASSAGSSSGPQGS.

It belongs to the nuclear hormone receptor family. NR3 subfamily. As to quaternary structure, binds DNA as a homodimer. Can form a heterodimer with ER-beta.

It is found in the nucleus. The steroid hormones and their receptors are involved in the regulation of eukaryotic gene expression and affect cellular proliferation and differentiation in target tissues. This chain is Estrogen receptor (esr1), found in Oreochromis aureus (Israeli tilapia).